Reading from the N-terminus, the 123-residue chain is Large ribosomal subunit protein uL14 (123 aa).

This sequence belongs to the universal ribosomal protein uL14 family. In terms of assembly, part of the 50S ribosomal subunit. Forms a cluster with proteins L3 and L19. In the 70S ribosome, L14 and L19 interact and together make contacts with the 16S rRNA in bridges B5 and B8.

Binds to 23S rRNA. Forms part of two intersubunit bridges in the 70S ribosome. This chain is Large ribosomal subunit protein uL14, found in Photobacterium profundum (strain SS9).